The sequence spans 156 residues: Small ribosomal subunit protein uS7 (156 aa).

This sequence belongs to the universal ribosomal protein uS7 family. As to quaternary structure, part of the 30S ribosomal subunit. Contacts proteins S9 and S11.

Its function is as follows. One of the primary rRNA binding proteins, it binds directly to 16S rRNA where it nucleates assembly of the head domain of the 30S subunit. Is located at the subunit interface close to the decoding center, probably blocks exit of the E-site tRNA. The protein is Small ribosomal subunit protein uS7 of Streptococcus pyogenes serotype M1.